A 105-amino-acid polypeptide reads, in one-letter code: ATP synthase subunit c (105 aa).

The next 3 membrane-spanning stretches (helical) occupy residues 3–23, 32–52, and 78–98; these read FLALFFLALAGVAFAHDGGMG, SILGAMIGLGIAAFGGAIGMG, and VAMAMIEAQVIYTLVFAIIAI.

The protein belongs to the ATPase C chain family. As to quaternary structure, F-type ATPases have 2 components, F(1) - the catalytic core - and F(0) - the membrane proton channel. F(1) has five subunits: alpha(3), beta(3), gamma(1), delta(1), epsilon(1). F(0) has three main subunits: a(1), b(2) and c(10-14). The alpha and beta chains form an alternating ring which encloses part of the gamma chain. F(1) is attached to F(0) by a central stalk formed by the gamma and epsilon chains, while a peripheral stalk is formed by the delta and b chains.

It localises to the cell inner membrane. Its function is as follows. F(1)F(0) ATP synthase produces ATP from ADP in the presence of a proton or sodium gradient. F-type ATPases consist of two structural domains, F(1) containing the extramembraneous catalytic core and F(0) containing the membrane proton channel, linked together by a central stalk and a peripheral stalk. During catalysis, ATP synthesis in the catalytic domain of F(1) is coupled via a rotary mechanism of the central stalk subunits to proton translocation. Key component of the F(0) channel; it plays a direct role in translocation across the membrane. A homomeric c-ring of between 10-14 subunits forms the central stalk rotor element with the F(1) delta and epsilon subunits. This Helicobacter pylori (strain P12) protein is ATP synthase subunit c.